Consider the following 405-residue polypeptide: Imidazolonepropionase (405 aa).

Residues H72 and H74 each coordinate Fe(3+). Residues H72 and H74 each coordinate Zn(2+). 3 residues coordinate 4-imidazolone-5-propanoate: R81, Y144, and H177. Position 144 (Y144) interacts with N-formimidoyl-L-glutamate. A Fe(3+)-binding site is contributed by H242. Residue H242 coordinates Zn(2+). Q245 lines the 4-imidazolone-5-propanoate pocket. A Fe(3+)-binding site is contributed by D317. D317 is a binding site for Zn(2+). Positions 319 and 321 each coordinate N-formimidoyl-L-glutamate. T322 contributes to the 4-imidazolone-5-propanoate binding site.

Belongs to the metallo-dependent hydrolases superfamily. HutI family. Requires Zn(2+) as cofactor. The cofactor is Fe(3+).

The protein resides in the cytoplasm. It carries out the reaction 4-imidazolone-5-propanoate + H2O = N-formimidoyl-L-glutamate. It participates in amino-acid degradation; L-histidine degradation into L-glutamate; N-formimidoyl-L-glutamate from L-histidine: step 3/3. Its function is as follows. Catalyzes the hydrolytic cleavage of the carbon-nitrogen bond in imidazolone-5-propanoate to yield N-formimidoyl-L-glutamate. It is the third step in the universal histidine degradation pathway. The sequence is that of Imidazolonepropionase from Erwinia tasmaniensis (strain DSM 17950 / CFBP 7177 / CIP 109463 / NCPPB 4357 / Et1/99).